We begin with the raw amino-acid sequence, 160 residues long: Cyclic pyranopterin monophosphate synthase (160 aa).

Residues 73 to 75 and 110 to 111 each bind substrate; these read LCH and ME. The active site involves D125.

The protein belongs to the MoaC family. As to quaternary structure, homohexamer; trimer of dimers.

The enzyme catalyses (8S)-3',8-cyclo-7,8-dihydroguanosine 5'-triphosphate = cyclic pyranopterin phosphate + diphosphate. It functions in the pathway cofactor biosynthesis; molybdopterin biosynthesis. Functionally, catalyzes the conversion of (8S)-3',8-cyclo-7,8-dihydroguanosine 5'-triphosphate to cyclic pyranopterin monophosphate (cPMP). This is Cyclic pyranopterin monophosphate synthase from Pseudomonas aeruginosa (strain LESB58).